The following is a 380-amino-acid chain: 1-deoxy-D-xylulose 5-phosphate reductoisomerase (380 aa).

NADPH is bound by residues Thr10, Gly11, Ser12, Ile13, Gly35, and Asn121. Lys122 is a binding site for 1-deoxy-D-xylulose 5-phosphate. Glu123 lines the NADPH pocket. Asp147 is a binding site for Mn(2+). Positions 148, 149, 173, and 196 each coordinate 1-deoxy-D-xylulose 5-phosphate. Residue Glu149 participates in Mn(2+) binding. Gly202 contributes to the NADPH binding site. Residues Ser209, Asn214, Lys215, and Glu218 each coordinate 1-deoxy-D-xylulose 5-phosphate. Glu218 is a binding site for Mn(2+).

Belongs to the DXR family. Mg(2+) serves as cofactor. Requires Mn(2+) as cofactor.

The catalysed reaction is 2-C-methyl-D-erythritol 4-phosphate + NADP(+) = 1-deoxy-D-xylulose 5-phosphate + NADPH + H(+). Its pathway is isoprenoid biosynthesis; isopentenyl diphosphate biosynthesis via DXP pathway; isopentenyl diphosphate from 1-deoxy-D-xylulose 5-phosphate: step 1/6. Functionally, catalyzes the NADPH-dependent rearrangement and reduction of 1-deoxy-D-xylulose-5-phosphate (DXP) to 2-C-methyl-D-erythritol 4-phosphate (MEP). The polypeptide is 1-deoxy-D-xylulose 5-phosphate reductoisomerase (Lachnospira eligens (strain ATCC 27750 / DSM 3376 / VPI C15-48 / C15-B4) (Eubacterium eligens)).